The primary structure comprises 907 residues: Chloride channel protein 2 (907 aa).

The Cytoplasmic portion of the chain corresponds to Met1–Val93. Residues Gln22 to Ala40 form an essential for channel gating by both voltage and cell volume region. Thr26 bears the Phosphothreonine mark. The segment at Glu42 to Trp55 is modulates channel gating by both voltage and cell volume. The next 2 helical transmembrane spans lie at Gly94–Trp127 and Ile136–Leu161. A Selectivity filter part_1 motif is present at residues Gly167–Pro171. Positions Ile170–Leu177 form an intramembrane region, helical. Transmembrane regions (helical) follow at residues Leu186–Ser204 and Glu211–Leu229. The short motif at Gly209–Pro213 is the Selectivity filter part_2 element. 2 intramembrane regions (helical) span residues Met245–Cys257 and Pro261–Ile269. Helical transmembrane passes span Tyr281–Trp301, Leu327–Met355, Phe364–Leu383, Ala435–Ala455, and Gly463–Trp486. The Selectivity filter part_3 signature appears at Gly463 to Pro467. An intramembrane region (helical) is located at residues Gly503–Val517. Positions Thr518–His519 form an intramembrane region, note=Loop between two helices. An intramembrane region (helical) is located at residues Thr520–Thr531. The segment at residues Gly532 to His536 is an intramembrane region (note=Loop between two helices). The chain crosses the membrane as a helical span at residues Ile537–Leu554. Residues Gln555–Gln907 lie on the Cytoplasmic side of the membrane. A CBS 1 domain is found at Met590–Pro648. The segment covering Arg650–Lys660 has biased composition (basic residues). The segment at Arg650 to Thr720 is disordered. Residues Ser664–Ser678 show a composition bias toward low complexity. A compositionally biased stretch (basic residues) spans Gln696–Leu705. Polar residues predominate over residues Ser710–Thr720. Position 767 is a phosphoserine (Ser767). A CBS 2 domain is found at Ile799–Val859. Positions Leu821–Leu822 match the Basolateral membrane sorting motif. Positions Ser865–Gln907 are disordered.

It belongs to the chloride channel (TC 2.A.49) family. ClC-2/CLCN2 subfamily. Homodimer. Interacts with auxiliary subunit HEPACAM. Post-translationally, phosphorylated. Activated by dephosphorylation. In terms of tissue distribution, ubiquitously expressed. Expressed in neurons and glial cells (at protein level).

It localises to the cell membrane. Its subcellular location is the basolateral cell membrane. It is found in the cell projection. The protein resides in the dendritic spine membrane. The protein localises to the axon. It carries out the reaction chloride(in) = chloride(out). The catalysed reaction is thiocyanate(in) = thiocyanate(out). It catalyses the reaction bromide(in) = bromide(out). The enzyme catalyses nitrate(in) = nitrate(out). It carries out the reaction iodide(out) = iodide(in). Its activity is regulated as follows. Common gate kinetics are down-regulated by intracellular ATP. Inhibited by AK-42, a derivative of meclofenamate. Inhibited by Cd(2+). Inhibited by Zn(2+) and PKC activation. Inhibited at acidic pH. CCLN2:HEPACAM channel conductance is up-regulated upon hypo-osmolarity. In terms of biological role, voltage-gated and osmosensitive chloride channel. Forms a homodimeric channel where each subunit has its own ion conduction pathway. Conducts double-barreled currents controlled by two types of gates, two fast glutamate gates that control each subunit independently and a slow common gate that opens and shuts off both subunits simultaneously. Displays inward rectification currents activated upon membrane hyperpolarization and extracellular hypotonicity. Contributes to chloride conductance involved in neuron excitability. In hippocampal neurons, generates a significant part of resting membrane conductance and provides an additional chloride efflux pathway to prevent chloride accumulation in dendrites upon GABA receptor activation. In glia, associates with the auxiliary subunit HEPACAM/GlialCAM at astrocytic processes and myelinated fiber tracts where it may regulate transcellular chloride flux buffering extracellular chloride and potassium concentrations. Regulates aldosterone production in adrenal glands. The opening of CLCN2 channels at hyperpolarized membrane potentials in the glomerulosa causes cell membrane depolarization, activation of voltage-gated calcium channels and increased expression of aldosterone synthase, the rate-limiting enzyme for aldosterone biosynthesis. Contributes to chloride conductance in retinal pigment epithelium involved in phagocytosis of shed photoreceptor outer segments and photoreceptor renewal. Conducts chloride currents at the basolateral membrane of epithelial cells with a role in chloride reabsorption rather than secretion. Permeable to small monovalent anions with chloride &gt; thiocyanate &gt; bromide &gt; nitrate &gt; iodide ion selectivity. This is Chloride channel protein 2 (Clcn2) from Rattus norvegicus (Rat).